Reading from the N-terminus, the 246-residue chain is Uridylate kinase (246 aa).

18-21 (KVSG) serves as a coordination point for ATP. A UMP-binding site is contributed by glycine 60. Positions 61 and 65 each coordinate ATP. Residues aspartate 80 and 141-148 (TGNPFFTT) each bind UMP. ATP contacts are provided by threonine 168, glutamine 169, tyrosine 174, and aspartate 177.

This sequence belongs to the UMP kinase family. Homohexamer.

It is found in the cytoplasm. It catalyses the reaction UMP + ATP = UDP + ADP. Its pathway is pyrimidine metabolism; CTP biosynthesis via de novo pathway; UDP from UMP (UMPK route): step 1/1. Its activity is regulated as follows. Inhibited by UTP. Its function is as follows. Catalyzes the reversible phosphorylation of UMP to UDP. The chain is Uridylate kinase from Granulibacter bethesdensis (strain ATCC BAA-1260 / CGDNIH1).